We begin with the raw amino-acid sequence, 238 residues long: ATP synthase subunit a (238 aa).

5 helical membrane-spanning segments follow: residues 18–38 (LTLL…VFWA), 76–96 (YSLL…LGLF), 114–134 (NLAF…IEGV), 166–186 (SLAI…GLIV), and 193–213 (VYWW…SVFI).

The protein belongs to the ATPase A chain family. As to quaternary structure, F-type ATPases have 2 components, CF(1) - the catalytic core - and CF(0) - the membrane proton channel. CF(1) has five subunits: alpha(3), beta(3), gamma(1), delta(1), epsilon(1). CF(0) has three main subunits: a(1), b(2) and c(9-12). The alpha and beta chains form an alternating ring which encloses part of the gamma chain. CF(1) is attached to CF(0) by a central stalk formed by the gamma and epsilon chains, while a peripheral stalk is formed by the delta and b chains.

It is found in the cell membrane. Functionally, key component of the proton channel; it plays a direct role in the translocation of protons across the membrane. This is ATP synthase subunit a from Streptococcus pyogenes serotype M49 (strain NZ131).